The sequence spans 930 residues: Serine/threonine-protein kinase PknD (930 aa).

One can recognise a Protein kinase domain in the interval 4-291; that stretch reads YDIIRMIGKG…ALKADIEQHL (288 aa). ATP-binding positions include 10–18 and Lys33; that span reads IGKGGMGEV. Asp138 acts as the Proton acceptor in catalysis.

Belongs to the protein kinase superfamily. Ser/Thr protein kinase family. Post-translationally, autophosphorylated on serine and threonine residues.

It catalyses the reaction L-seryl-[protein] + ATP = O-phospho-L-seryl-[protein] + ADP + H(+). It carries out the reaction L-threonyl-[protein] + ATP = O-phospho-L-threonyl-[protein] + ADP + H(+). Its function is as follows. Together with the serine/threonine kinase Pkn1, may play a role in the specific interactions with host proteins during intracellular growth. The polypeptide is Serine/threonine-protein kinase PknD (Chlamydia caviae (strain ATCC VR-813 / DSM 19441 / 03DC25 / GPIC) (Chlamydophila caviae)).